A 129-amino-acid chain; its full sequence is Small ribosomal subunit protein uS8 (129 aa).

Belongs to the universal ribosomal protein uS8 family. Part of the 30S ribosomal subunit. Contacts proteins S5 and S12.

In terms of biological role, one of the primary rRNA binding proteins, it binds directly to 16S rRNA central domain where it helps coordinate assembly of the platform of the 30S subunit. The protein is Small ribosomal subunit protein uS8 of Colwellia psychrerythraea (strain 34H / ATCC BAA-681) (Vibrio psychroerythus).